A 79-amino-acid chain; its full sequence is Reactive oxygen species modulator 1 (79 aa).

A helical membrane pass occupies residues 23–43 (FMMGFAVGMAAGALFGTFSCL). The tract at residues 42–60 (CLRFGMRGRELMGGVGKTM) is sufficient for antibacterial activity.

The protein belongs to the MGR2 family.

The protein localises to the mitochondrion inner membrane. Its function is as follows. Has antibacterial activity against a variety of bacteria including S.aureus, P.aeruginosa and M.tuberculosis. Acts by inducing bacterial membrane breakage. Functionally, induces production of reactive oxygen species (ROS) which are necessary for cell proliferation. May play a role in inducing oxidative DNA damage and replicative senescence. May play a role in the coordination of mitochondrial morphology and cell proliferation. The sequence is that of Reactive oxygen species modulator 1 (romo1) from Xenopus tropicalis (Western clawed frog).